Consider the following 105-residue polypeptide: uncharacterized protein (105 aa).

It belongs to the baculoviridae 11 kDa protein family.

This is an uncharacterized protein from Autographa californica nuclear polyhedrosis virus (AcMNPV).